The chain runs to 241 residues: Small ribosomal subunit protein uS2 (241 aa).

It belongs to the universal ribosomal protein uS2 family.

The chain is Small ribosomal subunit protein uS2 from Hamiltonella defensa subsp. Acyrthosiphon pisum (strain 5AT).